Reading from the N-terminus, the 157-residue chain is Putative pre-16S rRNA nuclease (157 aa).

The protein belongs to the YqgF nuclease family.

It localises to the cytoplasm. Its function is as follows. Could be a nuclease involved in processing of the 5'-end of pre-16S rRNA. The protein is Putative pre-16S rRNA nuclease of Anaplasma marginale (strain St. Maries).